Reading from the N-terminus, the 102-residue chain is Protamine-2 (102 aa).

Disordered regions lie at residues 1–40 (MVRY…SPEH) and 67–102 (HRQQ…CRRH). Phosphoserine occurs at positions 8, 10, and 37.

It belongs to the protamine P2 family. As to quaternary structure, interacts with TDRP. In terms of processing, proteolytic processing into mature chains is required for histone eviction during spermatogenesis. Transition proteins (TNP1 and TNP2) are required for processing. As to expression, testis.

The protein resides in the nucleus. Its subcellular location is the chromosome. Functionally, protamines substitute for histones in the chromatin of sperm during the haploid phase of spermatogenesis. They compact sperm DNA into a highly condensed, stable and inactive complex. This is Protamine-2 (PRM2) from Pan troglodytes (Chimpanzee).